The primary structure comprises 84 residues: Small ribosomal subunit protein uS17 (84 aa).

The protein belongs to the universal ribosomal protein uS17 family. Part of the 30S ribosomal subunit.

Functionally, one of the primary rRNA binding proteins, it binds specifically to the 5'-end of 16S ribosomal RNA. This Vibrio atlanticus (strain LGP32) (Vibrio splendidus (strain Mel32)) protein is Small ribosomal subunit protein uS17.